The chain runs to 338 residues: Mycothiol acetyltransferase (338 aa).

N-acetyltransferase domains lie at 29–173 (PETY…HQLP) and 181–338 (ISLR…NKFQ). 1D-myo-inositol 2-(L-cysteinylamino)-2-deoxy-alpha-D-glucopyranoside is bound at residue Asp-55. 105–107 (LVV) contributes to the acetyl-CoA binding site. Residues Glu-208, Lys-248, and Glu-261 each coordinate 1D-myo-inositol 2-(L-cysteinylamino)-2-deoxy-alpha-D-glucopyranoside. Acetyl-CoA contacts are provided by residues 265–267 (VGI) and 272–278 (QGKGLGK). Residue Tyr-299 participates in 1D-myo-inositol 2-(L-cysteinylamino)-2-deoxy-alpha-D-glucopyranoside binding.

Belongs to the acetyltransferase family. MshD subfamily. Monomer.

The enzyme catalyses 1D-myo-inositol 2-(L-cysteinylamino)-2-deoxy-alpha-D-glucopyranoside + acetyl-CoA = mycothiol + CoA + H(+). In terms of biological role, catalyzes the transfer of acetyl from acetyl-CoA to desacetylmycothiol (Cys-GlcN-Ins) to form mycothiol. The chain is Mycothiol acetyltransferase from Renibacterium salmoninarum (strain ATCC 33209 / DSM 20767 / JCM 11484 / NBRC 15589 / NCIMB 2235).